Consider the following 351-residue polypeptide: Phospho-N-acetylmuramoyl-pentapeptide-transferase (351 aa).

The next 10 helical transmembrane spans lie at 17-37 (TAYATIFAFLLALIFGPFIIS), 61-83 (MGIPTMGGVLIFFCVLVSLFFWI), 88-105 (IYFLIVLFVMVSFACLGF), 130-150 (ILFSFISVVMLYYFGGEHVSI), 158-178 (SLKLDLGILYIPFGMFVLISA), 190-210 (GLAIGLSIVVIGALIIIAYLT), 230-250 (LVIFLGALLGGSFGFLWFNAY), 254-274 (IMMGDTGSLSIGAVLGMVALI), 279-299 (ILFAILAGVFVVETLSVIIQV), and 328-348 (QVVIRFWIIGLIFAILALSTI).

Belongs to the glycosyltransferase 4 family. MraY subfamily. Mg(2+) is required as a cofactor.

Its subcellular location is the cell inner membrane. It carries out the reaction UDP-N-acetyl-alpha-D-muramoyl-L-alanyl-gamma-D-glutamyl-meso-2,6-diaminopimeloyl-D-alanyl-D-alanine + di-trans,octa-cis-undecaprenyl phosphate = di-trans,octa-cis-undecaprenyl diphospho-N-acetyl-alpha-D-muramoyl-L-alanyl-D-glutamyl-meso-2,6-diaminopimeloyl-D-alanyl-D-alanine + UMP. The protein operates within cell wall biogenesis; peptidoglycan biosynthesis. Functionally, catalyzes the initial step of the lipid cycle reactions in the biosynthesis of the cell wall peptidoglycan: transfers peptidoglycan precursor phospho-MurNAc-pentapeptide from UDP-MurNAc-pentapeptide onto the lipid carrier undecaprenyl phosphate, yielding undecaprenyl-pyrophosphoryl-MurNAc-pentapeptide, known as lipid I. The protein is Phospho-N-acetylmuramoyl-pentapeptide-transferase of Borrelia recurrentis (strain A1).